A 669-amino-acid polypeptide reads, in one-letter code: L-type lectin-domain containing receptor kinase V.9 (669 aa).

Positions 1–21 are cleaved as a signal peptide; that stretch reads MKFFVLVLLLVLQFFSNKALS. The Extracellular portion of the chain corresponds to 22–286; it reads QSEEGEFGFN…RDSRSTSVKK (265 aa). Residues 38-259 form a legume-lectin like region; that stretch reads SGIAITNSKG…SHYILGWTFK (222 aa). 5 N-linked (GlcNAc...) asparagine glycosylation sites follow: Asn53, Asn75, Asn124, Asn206, and Asn261. The helical transmembrane segment at 287–307 threads the bilayer; that stretch reads ILAISLSLTSLAILVFLTISY. Over 308–669 the chain is Cytoplasmic; it reads MLFLKRKKLM…FTEPFVSHGR (362 aa). One can recognise a Protein kinase domain in the interval 344-603; it reads FRNSELLGKG…LGLFCSHPVA (260 aa). Residues 350-358 and Lys373 each bind ATP; that span reads LGKGGFGKV. The active-site Proton acceptor is the Asp469.

This sequence in the C-terminal section; belongs to the protein kinase superfamily. Ser/Thr protein kinase family. It in the N-terminal section; belongs to the leguminous lectin family.

It is found in the cell membrane. The enzyme catalyses L-seryl-[protein] + ATP = O-phospho-L-seryl-[protein] + ADP + H(+). It carries out the reaction L-threonyl-[protein] + ATP = O-phospho-L-threonyl-[protein] + ADP + H(+). The protein is L-type lectin-domain containing receptor kinase V.9 (LECRK59) of Arabidopsis thaliana (Mouse-ear cress).